We begin with the raw amino-acid sequence, 119 residues long: MSASVASVISRFLEEYLSSTPQRLKLLDAYLLYILLTGALQFGYCLLVGTFPFNSFLSGFISCVGSFILAGNGSLRNRSNNVFTLVRCFSSLVTLFYSRSPPREVPRGACIALFCERGN.

Position 2 is an N-acetylserine (Ser-2). The Cytoplasmic portion of the chain corresponds to 2–30; it reads SASVASVISRFLEEYLSSTPQRLKLLDAY. A helical membrane pass occupies residues 31-51; the sequence is LLYILLTGALQFGYCLLVGTF. Topologically, residues 52 to 54 are lumenal; it reads PFN. Residues 55-75 traverse the membrane as a helical segment; sequence SFLSGFISCVGSFILAGNGSL. The Cytoplasmic portion of the chain corresponds to 76–81; that stretch reads RNRSNN. A helical transmembrane segment spans residues 82–98; that stretch reads VFTLVRCFSSLVTLFYS. The Lumenal segment spans residues 99–119; sequence RSPPREVPRGACIALFCERGN.

Belongs to the DAD/OST2 family. As to quaternary structure, component of the oligosaccharyltransferase (OST) complex. OST exists in two different complex forms which contain common core subunits RPN1, RPN2, OST48, OST4, DAD1 and TMEM258, either STT3A or STT3B as catalytic subunits, and form-specific accessory subunits. STT3A complex assembly occurs through the formation of 3 subcomplexes. Subcomplex 1 contains RPN1 and TMEM258, subcomplex 2 contains the STT3A-specific subunits STT3A, DC2/OSTC, and KCP2 as well as the core subunit OST4, and subcomplex 3 contains RPN2, DAD1, and OST48. The STT3A complex can form stable complexes with the Sec61 complex or with both the Sec61 and TRAP complexes.

The protein resides in the endoplasmic reticulum membrane. It functions in the pathway protein modification; protein glycosylation. Its function is as follows. Subunit of the oligosaccharyl transferase (OST) complex that catalyzes the initial transfer of a defined glycan (Glc(3)Man(9)GlcNAc(2) in eukaryotes) from the lipid carrier dolichol-pyrophosphate to an asparagine residue within an Asn-X-Ser/Thr consensus motif in nascent polypeptide chains, the first step in protein N-glycosylation. N-glycosylation occurs cotranslationally and the complex associates with the Sec61 complex at the channel-forming translocon complex that mediates protein translocation across the endoplasmic reticulum (ER). All subunits are required for a maximal enzyme activity. The sequence is that of Dolichyl-diphosphooligosaccharide--protein glycosyltransferase subunit DAD1 from Canis lupus familiaris (Dog).